The following is a 446-amino-acid chain: Exodeoxyribonuclease 7 large subunit (446 aa).

It belongs to the XseA family. In terms of assembly, heterooligomer composed of large and small subunits.

The protein resides in the cytoplasm. The enzyme catalyses Exonucleolytic cleavage in either 5'- to 3'- or 3'- to 5'-direction to yield nucleoside 5'-phosphates.. Bidirectionally degrades single-stranded DNA into large acid-insoluble oligonucleotides, which are then degraded further into small acid-soluble oligonucleotides. This Streptococcus pyogenes serotype M49 (strain NZ131) protein is Exodeoxyribonuclease 7 large subunit.